Reading from the N-terminus, the 380-residue chain is ATPase ASNA1 homolog (380 aa).

48-55 contributes to the ATP binding site; it reads KGGVGKTT. Asp-77 is a catalytic residue. Residues Glu-248 and Asn-275 each contribute to the ATP site.

It belongs to the arsA ATPase family. In terms of assembly, homodimer.

The protein localises to the cytoplasm. The protein resides in the endoplasmic reticulum. Functionally, ATPase required for the post-translational delivery of tail-anchored (TA) proteins to the endoplasmic reticulum. Recognizes and selectively binds the transmembrane domain of TA proteins in the cytosol. This complex then targets to the endoplasmic reticulum by membrane-bound receptors, where the tail-anchored protein is released for insertion. This process is regulated by ATP binding and hydrolysis. ATP binding drives the homodimer towards the closed dimer state, facilitating recognition of newly synthesized TA membrane proteins. ATP hydrolysis is required for insertion. Subsequently, the homodimer reverts towards the open dimer state, lowering its affinity for the membrane-bound receptor, and returning it to the cytosol to initiate a new round of targeting. In Plasmodium yoelii yoelii, this protein is ATPase ASNA1 homolog.